The chain runs to 158 residues: Small ribosomal subunit protein uS9 (158 aa).

It belongs to the universal ribosomal protein uS9 family.

The polypeptide is Small ribosomal subunit protein uS9 (Brucella melitensis biotype 2 (strain ATCC 23457)).